Reading from the N-terminus, the 117-residue chain is Large ribosomal subunit protein uL18 (117 aa).

This sequence belongs to the universal ribosomal protein uL18 family. In terms of assembly, part of the 50S ribosomal subunit; part of the 5S rRNA/L5/L18/L25 subcomplex. Contacts the 5S and 23S rRNAs.

In terms of biological role, this is one of the proteins that bind and probably mediate the attachment of the 5S RNA into the large ribosomal subunit, where it forms part of the central protuberance. This chain is Large ribosomal subunit protein uL18, found in Phytoplasma mali (strain AT).